Reading from the N-terminus, the 298-residue chain is GTPase Era (298 aa).

The Era-type G domain maps to 8–176; the sequence is RCGRIAVIGR…VSDLLALLPE (169 aa). Residues 16–23 are G1; the sequence is GRPNVGKS. 16–23 is a GTP binding site; that stretch reads GRPNVGKS. A G2 region spans residues 42-46; sequence QTTRH. Residues 63–66 form a G3 region; sequence DTPG. Residues 63 to 67 and 125 to 128 each bind GTP; these read DTPGL and NKID. The G4 stretch occupies residues 125–128; that stretch reads NKID. The tract at residues 155-157 is G5; sequence VSA. The 85-residue stretch at 199-283 folds into the KH type-2 domain; sequence VREQVMRQLG…FLETWVRVRK (85 aa).

The protein belongs to the TRAFAC class TrmE-Era-EngA-EngB-Septin-like GTPase superfamily. Era GTPase family. In terms of assembly, monomer.

It is found in the cytoplasm. Its subcellular location is the cell inner membrane. Its function is as follows. An essential GTPase that binds both GDP and GTP, with rapid nucleotide exchange. Plays a role in 16S rRNA processing and 30S ribosomal subunit biogenesis and possibly also in cell cycle regulation and energy metabolism. The chain is GTPase Era from Xylella fastidiosa (strain Temecula1 / ATCC 700964).